A 147-amino-acid chain; its full sequence is Plasminogen receptor (KT) (147 aa).

The Extracellular portion of the chain corresponds to 1–52; it reads MGFIFSKSMNESMKNQKEFMLMNARLQLERQLIMQSEMRERQMAMQIAWSRE. The chain crosses the membrane as a helical span at residues 53-73; it reads FLKYFGTFFGLAAISLTAGAI. The Cytoplasmic segment spans residues 74-78; the sequence is KKKKP. The chain crosses the membrane as a helical span at residues 79–99; that stretch reads AFLVPIVPLSFILTYQYDLGY. Over 100-147 the chain is Extracellular; it reads GTLLERMKGEAEDILETEKSKLQLPRGMITFESIEKARKEQSRFFIDK.

Interacts with PLAT and PLAUR. As to expression, expressed in peripheral blood cells and monocytes. Expressed in adrenal medulla.

It is found in the cell membrane. Receptor for plasminogen. Regulates urokinase plasminogen activator-dependent and stimulates tissue-type plasminogen activator-dependent cell surface plasminogen activation. Proposed to be part of a local catecholaminergic cell plasminogen activation system that regulates neuroendocrine prohormone processing. Involved in regulation of inflammatory response; regulates monocyte chemotactic migration and matrix metalloproteinase activation, such as of MMP2 and MMP9. In Homo sapiens (Human), this protein is Plasminogen receptor (KT) (PLGRKT).